The sequence spans 209 residues: MSSQYSNVENLSPQTIRQVMRELQEMETTPPEGIKVLINESDVTDIQALIDGPAGTPYAAGVFRVKLTLNKDFPQTPPKAYFLTKIFHPNVAANGEICVNTLKKDWKPDLGIKHILLTIKCLLIVPNPESALNEEAGKMLLERYDDYSQRARMMTEIHAQPAKCGVGASGDAKDDDGPSTKKHAGLDKKLQDKKKEKLLKEKKRMLKRL.

Positions 14 to 160 (QTIRQVMREL…ARMMTEIHAQ (147 aa)) constitute a UBC core domain. The active-site Glycyl thioester intermediate is the cysteine 98. Positions 164-209 (CGVGASGDAKDDDGPSTKKHAGLDKKLQDKKKEKLLKEKKRMLKRL) are disordered. Residues 171–199 (DAKDDDGPSTKKHAGLDKKLQDKKKEKLL) show a composition bias toward basic and acidic residues. The span at 200 to 209 (KEKKRMLKRL) shows a compositional bias: basic residues.

This sequence belongs to the ubiquitin-conjugating enzyme family.

It carries out the reaction S-ubiquitinyl-[E1 ubiquitin-activating enzyme]-L-cysteine + [E2 ubiquitin-conjugating enzyme]-L-cysteine = [E1 ubiquitin-activating enzyme]-L-cysteine + S-ubiquitinyl-[E2 ubiquitin-conjugating enzyme]-L-cysteine.. Its pathway is protein modification; protein ubiquitination. Functionally, catalyzes the covalent attachment of ubiquitin to other proteins. Acts as an essential factor of the anaphase promoting complex/cyclosome (APC/C), a cell cycle-regulated ubiquitin ligase that controls progression through mitosis. Acts by specifically elongating polyubiquitin chains initiated by the E2 enzyme vih/UbcH10 on APC/C substrates, enhancing the degradation of APC/C substrates by the proteasome and promoting mitotic exit. The sequence is that of Ubiquitin-conjugating enzyme E2 S from Drosophila yakuba (Fruit fly).